Here is a 213-residue protein sequence, read N- to C-terminus: Redox-sensing transcriptional repressor Rex (213 aa).

The segment at residues 16–55 (VYSRFLERMDRNGIVTVSSGEIAEGVGVSSAQVRKDLAYF) is a DNA-binding region (H-T-H motif). 90–95 (GAGNLG) contributes to the NAD(+) binding site.

It belongs to the transcriptional regulatory Rex family. As to quaternary structure, homodimer.

Its subcellular location is the cytoplasm. Its function is as follows. Modulates transcription in response to changes in cellular NADH/NAD(+) redox state. The polypeptide is Redox-sensing transcriptional repressor Rex (Pelotomaculum thermopropionicum (strain DSM 13744 / JCM 10971 / SI)).